The primary structure comprises 480 residues: Glutamyl-tRNA(Gln) amidotransferase subunit A (480 aa).

Catalysis depends on charge relay system residues K74 and S149. S173 serves as the catalytic Acyl-ester intermediate.

It belongs to the amidase family. GatA subfamily. Heterotrimer of A, B and C subunits.

It carries out the reaction L-glutamyl-tRNA(Gln) + L-glutamine + ATP + H2O = L-glutaminyl-tRNA(Gln) + L-glutamate + ADP + phosphate + H(+). Functionally, allows the formation of correctly charged Gln-tRNA(Gln) through the transamidation of misacylated Glu-tRNA(Gln) in organisms which lack glutaminyl-tRNA synthetase. The reaction takes place in the presence of glutamine and ATP through an activated gamma-phospho-Glu-tRNA(Gln). The chain is Glutamyl-tRNA(Gln) amidotransferase subunit A from Ruthia magnifica subsp. Calyptogena magnifica.